A 103-amino-acid polypeptide reads, in one-letter code: Stefin-2 (103 aa).

The Secondary area of contact signature appears at 52–56; that stretch reads QVVQG.

The protein belongs to the cystatin family.

It is found in the cytoplasm. This is an intracellular thiol proteinase inhibitor. The polypeptide is Stefin-2 (Stfa2) (Mus musculus (Mouse)).